Consider the following 101-residue polypeptide: Urease subunit beta (101 aa).

It belongs to the urease beta subunit family. As to quaternary structure, heterotrimer of UreA (gamma), UreB (beta) and UreC (alpha) subunits. Three heterotrimers associate to form the active enzyme.

Its subcellular location is the cytoplasm. It catalyses the reaction urea + 2 H2O + H(+) = hydrogencarbonate + 2 NH4(+). The protein operates within nitrogen metabolism; urea degradation; CO(2) and NH(3) from urea (urease route): step 1/1. This is Urease subunit beta from Psychromonas ingrahamii (strain DSM 17664 / CCUG 51855 / 37).